A 385-amino-acid polypeptide reads, in one-letter code: Putative transport protein BpOF4_00890 (385 aa).

Transmembrane regions (helical) follow at residues 42–62 (TIWI…ILPV), 63–83 (SLPL…VNAL), 93–113 (VAVM…GYYI), 191–211 (SIPG…LFML), 255–275 (IIIF…VALL), 276–296 (MAFI…VILA), 304–324 (IVGD…LLII), and 350–370 (LGLM…VIAF).

It belongs to the autoinducer-2 exporter (AI-2E) (TC 2.A.86) family.

The protein resides in the cell membrane. The polypeptide is Putative transport protein BpOF4_00890 (Alkalihalophilus pseudofirmus (strain ATCC BAA-2126 / JCM 17055 / OF4) (Bacillus pseudofirmus)).